The following is a 306-amino-acid chain: Ribonuclease Z (306 aa).

Zn(2+) contacts are provided by histidine 63, histidine 65, aspartate 67, histidine 68, histidine 141, aspartate 211, and histidine 269. The active-site Proton acceptor is aspartate 67.

Belongs to the RNase Z family. As to quaternary structure, homodimer. Zn(2+) is required as a cofactor.

The catalysed reaction is Endonucleolytic cleavage of RNA, removing extra 3' nucleotides from tRNA precursor, generating 3' termini of tRNAs. A 3'-hydroxy group is left at the tRNA terminus and a 5'-phosphoryl group is left at the trailer molecule.. Functionally, zinc phosphodiesterase, which displays some tRNA 3'-processing endonuclease activity. Probably involved in tRNA maturation, by removing a 3'-trailer from precursor tRNA. The sequence is that of Ribonuclease Z from Staphylococcus aureus (strain USA300).